A 320-amino-acid chain; its full sequence is 1-aminocyclopropane-1-carboxylate oxidase 3 (320 aa).

In terms of domain architecture, Fe2OG dioxygenase spans 153 to 253 (PNFGTKVSNY…RMSLASFYNP (101 aa)). Fe cation is bound by residues His177, Asp179, and His234.

This sequence belongs to the iron/ascorbate-dependent oxidoreductase family. Fe cation serves as cofactor.

The enzyme catalyses 1-aminocyclopropane-1-carboxylate + L-ascorbate + O2 = ethene + L-dehydroascorbate + hydrogen cyanide + CO2 + 2 H2O. The protein operates within alkene biosynthesis; ethylene biosynthesis via S-adenosyl-L-methionine; ethylene from S-adenosyl-L-methionine: step 2/2. The sequence is that of 1-aminocyclopropane-1-carboxylate oxidase 3 (ACO3) from Petunia hybrida (Petunia).